Reading from the N-terminus, the 150-residue chain is Ribosome-binding factor A (150 aa).

The interval 126-150 (EVARDLSHDDDEDGGADEAPRNGDE) is disordered.

The protein belongs to the RbfA family. As to quaternary structure, monomer. Binds 30S ribosomal subunits, but not 50S ribosomal subunits or 70S ribosomes.

It localises to the cytoplasm. Its function is as follows. One of several proteins that assist in the late maturation steps of the functional core of the 30S ribosomal subunit. Associates with free 30S ribosomal subunits (but not with 30S subunits that are part of 70S ribosomes or polysomes). Required for efficient processing of 16S rRNA. May interact with the 5'-terminal helix region of 16S rRNA. In Brucella abortus (strain S19), this protein is Ribosome-binding factor A.